We begin with the raw amino-acid sequence, 67 residues long: Tachystatin-A2 (67 aa).

Residues 1–23 (MKLQNTLILIGCLFLMGAMIGDA) form the signal peptide. Disulfide bonds link Cys27-Cys47, Cys34-Cys52, and Cys46-Cys64.

In terms of tissue distribution, granular hemocytes, small secretory granules.

The protein localises to the secreted. Exhibits stronger antimicrobial activity against the Gram-positive bacteria (S.aureus (IC(50)=4.2 ug/ml)) and fungi (C.albicans (IC(50)=3.0 ug/ml) and P.pastoris (IC(50)=0.5 ug/ml)) than Gram-negative bacteria (E.coli (IC(50)=25 ug/ml)). Binds to chitin (8.4 uM are required to obtain 50% of binding). Does not cause hemolysis on sheep erythrocytes. Has no blocking activity on the P-type calcium channel. Has also been shown to weakly inhibit Kv1.2/KCNA2 voltage-gated potassium channels and TRPV1 receptors. This chain is Tachystatin-A2, found in Tachypleus tridentatus (Japanese horseshoe crab).